We begin with the raw amino-acid sequence, 393 residues long: Thyrotropin-releasing hormone receptor (393 aa).

At 1 to 28 (MENDTVSEMNQTELQPQAAVALEYQVVT) the chain is on the extracellular side. 2 N-linked (GlcNAc...) asparagine glycosylation sites follow: asparagine 3 and asparagine 10. A helical transmembrane segment spans residues 29–51 (ILLVVIICGLGIVGNIMVVLVVM). Residues 52 to 61 (RTKHMRTPTN) are Cytoplasmic-facing. A helical membrane pass occupies residues 62 to 83 (CYLVSLAVADLMVLVAAGLPNI). Over 84–99 (TDSIYGSWVYGYVGCL) the chain is Extracellular. A disulfide bond links cysteine 98 and cysteine 179. A helical transmembrane segment spans residues 100–121 (CITYLQYLGINASSCSITAFTI). Residues 122-144 (ERYIAICHPIKAQFLCTFSRAKK) are Cytoplasmic-facing. A helical transmembrane segment spans residues 145–168 (IIIFVWAFTSIYCMLWFFLLDLNI). Over 169–193 (STYKNAVVVSCGYKISRNYYSPIYL) the chain is Extracellular. Residues 194–215 (MDFGVFYVVPMILATVLYGFIA) traverse the membrane as a helical segment. The Cytoplasmic segment spans residues 216-266 (RILFLNPIPSDPKENSKMWKNDSIHQNKNLNLNATNRCFNSTVSSRKQVTK). A helical transmembrane segment spans residues 267 to 288 (MLAVVVILFALLWMPYRTLVVV). Topologically, residues 289–296 (NSFLSSPF) are extracellular. A helical membrane pass occupies residues 297–319 (QENWFLLFCRICIYLNSAINPVI). Residues 320–393 (YNLMSQKFRA…FDDTCLASEN (74 aa)) lie on the Cytoplasmic side of the membrane.

The protein belongs to the G-protein coupled receptor 1 family.

It is found in the cell membrane. Receptor for thyrotropin-releasing hormone (TRH). Upon ligand binding, this G-protein-coupled receptor triggers activation of the phosphatidylinositol (IP3)-calcium-protein kinase C (PKC) pathway. This Mus musculus (Mouse) protein is Thyrotropin-releasing hormone receptor (Trhr).